The sequence spans 36 residues: Photosystem I reaction center subunit VIII (36 aa).

The helical transmembrane segment at Met1 to Ile21 threads the bilayer.

The protein belongs to the PsaI family.

It is found in the plastid. The protein localises to the chloroplast thylakoid membrane. In terms of biological role, may help in the organization of the PsaL subunit. The polypeptide is Photosystem I reaction center subunit VIII (Coffea arabica (Arabian coffee)).